Reading from the N-terminus, the 98-residue chain is NADH-ubiquinone oxidoreductase chain 4L (98 aa).

3 helical membrane-spanning segments follow: residues 1–21, 29–49, and 61–81; these read MSMV…GMLV, SLLC…VTIL, and IILL…LVMV.

It belongs to the complex I subunit 4L family. In terms of assembly, core subunit of respiratory chain NADH dehydrogenase (Complex I) which is composed of 45 different subunits.

The protein resides in the mitochondrion inner membrane. The catalysed reaction is a ubiquinone + NADH + 5 H(+)(in) = a ubiquinol + NAD(+) + 4 H(+)(out). In terms of biological role, core subunit of the mitochondrial membrane respiratory chain NADH dehydrogenase (Complex I) which catalyzes electron transfer from NADH through the respiratory chain, using ubiquinone as an electron acceptor. Part of the enzyme membrane arm which is embedded in the lipid bilayer and involved in proton translocation. The polypeptide is NADH-ubiquinone oxidoreductase chain 4L (MT-ND4L) (Odobenus rosmarus rosmarus (Atlantic walrus)).